We begin with the raw amino-acid sequence, 676 residues long: tRNA uridine 5-carboxymethylaminomethyl modification enzyme MnmG (676 aa).

15–20 provides a ligand contact to FAD; sequence GAGHAG. 316–330 provides a ligand contact to NAD(+); the sequence is GPRYCPSIEDKIVRF.

This sequence belongs to the MnmG family. As to quaternary structure, homodimer. Heterotetramer of two MnmE and two MnmG subunits. It depends on FAD as a cofactor.

Its subcellular location is the cytoplasm. NAD-binding protein involved in the addition of a carboxymethylaminomethyl (cmnm) group at the wobble position (U34) of certain tRNAs, forming tRNA-cmnm(5)s(2)U34. The chain is tRNA uridine 5-carboxymethylaminomethyl modification enzyme MnmG from Roseiflexus castenholzii (strain DSM 13941 / HLO8).